Consider the following 104-residue polypeptide: L-rhamnose mutarotase (104 aa).

A substrate-binding site is contributed by Tyr-18. His-22 functions as the Proton donor in the catalytic mechanism. Substrate is bound by residues Tyr-41 and 76 to 77 (WW).

The protein belongs to the rhamnose mutarotase family. As to quaternary structure, homodimer.

It localises to the cytoplasm. It carries out the reaction alpha-L-rhamnose = beta-L-rhamnose. The protein operates within carbohydrate metabolism; L-rhamnose metabolism. Involved in the anomeric conversion of L-rhamnose. This Escherichia coli O127:H6 (strain E2348/69 / EPEC) protein is L-rhamnose mutarotase.